Reading from the N-terminus, the 494-residue chain is 1-aminocyclopropane-1-carboxylate synthase 2 (494 aa).

K279 carries the N6-(pyridoxal phosphate)lysine modification. The tract at residues 474–494 (NVLNSPHTMSPHSPLVRARTY) is disordered. A compositionally biased stretch (polar residues) spans 475–484 (VLNSPHTMSP).

The protein belongs to the class-I pyridoxal-phosphate-dependent aminotransferase family. Homodimer. Pyridoxal 5'-phosphate serves as cofactor.

It catalyses the reaction S-adenosyl-L-methionine = 1-aminocyclopropane-1-carboxylate + S-methyl-5'-thioadenosine + H(+). The protein operates within alkene biosynthesis; ethylene biosynthesis via S-adenosyl-L-methionine; ethylene from S-adenosyl-L-methionine: step 1/2. Its function is as follows. Catalyzes the formation of 1-aminocyclopropane-1-carboxylate, a direct precursor of ethylene in higher plants. This Cucurbita pepo (Vegetable marrow) protein is 1-aminocyclopropane-1-carboxylate synthase 2 (ACS2).